The primary structure comprises 287 residues: MGNQKLKWTAEEEEALLAGIRKHGPGKWKNILRDPEFADQLIHRSNIDLKDKWRNLSVPPGTQSLTNKARPAKVKEEGDTPAADANDAVTIPRPIPTIPPPPGRRTLPSELIPDENTKNAPRYDGVIFEALSALADGNGSDVSSIYHFIEPRHEVPPNFRRILSTRLRRLAAQSKLEKVSTFKSIQNFYKIPDPSGTKIGVPKPKETHTKLRQANNQTSADSQQMIEEAAITAACKVVEAENKIDVAKLAAEEFEKMTKIAEENRKLLVIATEMHELCSCGETMLLA.

One can recognise an HTH myb-type domain in the interval 1-62 (MGNQKLKWTA…WRNLSVPPGT (62 aa)). A DNA-binding region (H-T-H motif) is located at residues 28–58 (WKNILRDPEFADQLIHRSNIDLKDKWRNLSV). The disordered stretch occupies residues 58-107 (VPPGTQSLTNKARPAKVKEEGDTPAADANDAVTIPRPIPTIPPPPGRRTL). Over residues 93 to 103 (RPIPTIPPPPG) the composition is skewed to pro residues. Residues 119-193 (NAPRYDGVIF…SIQNFYKIPD (75 aa)) enclose the H15 domain. The stretch at 233–259 (AACKVVEAENKIDVAKLAAEEFEKMTK) forms a coiled coil.

Belongs to the histone H1/H5 family. SMH subfamily.

The protein resides in the nucleus. It is found in the chromosome. Its function is as follows. Binds preferentially double-stranded telomeric repeats. The polypeptide is Telomere repeat-binding factor 5 (Arabidopsis thaliana (Mouse-ear cress)).